A 440-amino-acid polypeptide reads, in one-letter code: Xylose isomerase (440 aa).

Catalysis depends on residues H100 and D103. Mg(2+) contacts are provided by E231, E267, H270, D295, D306, D308, and D338.

It belongs to the xylose isomerase family. In terms of assembly, homotetramer. It depends on Mg(2+) as a cofactor.

The protein resides in the cytoplasm. The enzyme catalyses alpha-D-xylose = alpha-D-xylulofuranose. This is Xylose isomerase from Burkholderia orbicola (strain MC0-3).